A 55-amino-acid chain; its full sequence is Small ribosomal subunit protein bS21 (55 aa).

Belongs to the bacterial ribosomal protein bS21 family.

The sequence is that of Small ribosomal subunit protein bS21 from Ureaplasma parvum serovar 3 (strain ATCC 27815 / 27 / NCTC 11736).